The following is a 389-amino-acid chain: S-adenosylmethionine synthase (389 aa).

His-15 is an ATP binding site. Asp-17 serves as a coordination point for Mg(2+). A K(+)-binding site is contributed by Glu-43. L-methionine is bound by residues Glu-56 and Gln-99. A flexible loop region spans residues 99–109 (QSSDIQYSIDH). Residues 166-168 (DAK), 232-233 (RF), Asp-241, 247-248 (RK), Ser-264, and Lys-268 each bind ATP. Asp-241 is a binding site for L-methionine. Residue Lys-272 participates in L-methionine binding.

This sequence belongs to the AdoMet synthase family. Homotetramer; dimer of dimers. Mg(2+) is required as a cofactor. It depends on K(+) as a cofactor.

Its subcellular location is the cytoplasm. It catalyses the reaction L-methionine + ATP + H2O = S-adenosyl-L-methionine + phosphate + diphosphate. Its pathway is amino-acid biosynthesis; S-adenosyl-L-methionine biosynthesis; S-adenosyl-L-methionine from L-methionine: step 1/1. Functionally, catalyzes the formation of S-adenosylmethionine (AdoMet) from methionine and ATP. The overall synthetic reaction is composed of two sequential steps, AdoMet formation and the subsequent tripolyphosphate hydrolysis which occurs prior to release of AdoMet from the enzyme. In Blochmanniella pennsylvanica (strain BPEN), this protein is S-adenosylmethionine synthase.